The sequence spans 288 residues: Acetyl-coenzyme A carboxylase carboxyl transferase subunit beta (288 aa).

A CoA carboxyltransferase N-terminal domain is found at 34–288 (LFAKCPACKH…HLVAFHGGGQ (255 aa)). Zn(2+)-binding residues include cysteine 38, cysteine 41, cysteine 56, and cysteine 59. A C4-type zinc finger spans residues 38–59 (CPACKHMIYKKDLGLAKICPTC).

Belongs to the AccD/PCCB family. As to quaternary structure, acetyl-CoA carboxylase is a heterohexamer composed of biotin carboxyl carrier protein (AccB), biotin carboxylase (AccC) and two subunits each of ACCase subunit alpha (AccA) and ACCase subunit beta (AccD). Requires Zn(2+) as cofactor.

Its subcellular location is the cytoplasm. It catalyses the reaction N(6)-carboxybiotinyl-L-lysyl-[protein] + acetyl-CoA = N(6)-biotinyl-L-lysyl-[protein] + malonyl-CoA. It participates in lipid metabolism; malonyl-CoA biosynthesis; malonyl-CoA from acetyl-CoA: step 1/1. In terms of biological role, component of the acetyl coenzyme A carboxylase (ACC) complex. Biotin carboxylase (BC) catalyzes the carboxylation of biotin on its carrier protein (BCCP) and then the CO(2) group is transferred by the transcarboxylase to acetyl-CoA to form malonyl-CoA. This chain is Acetyl-coenzyme A carboxylase carboxyl transferase subunit beta, found in Streptococcus pyogenes serotype M3 (strain ATCC BAA-595 / MGAS315).